A 308-amino-acid polypeptide reads, in one-letter code: 4-hydroxyproline 2-epimerase (308 aa).

The active-site Proton acceptor is Cys-88. Substrate is bound by residues 89 to 90 (GH), His-208, and Asp-232. Cys-236 serves as the catalytic Proton donor. 237–238 (GT) contacts substrate.

This sequence belongs to the proline racemase family.

The catalysed reaction is trans-4-hydroxy-L-proline = cis-4-hydroxy-D-proline. Functionally, catalyzes the epimerization of trans-4-hydroxy-L-proline (t4LHyp) to cis-4-hydroxy-D-proline (c4DHyp). Is likely involved in a degradation pathway that converts t4LHyp to alpha-ketoglutarate. Can also catalyze the epimerization of trans-3-hydroxy-L-proline (t3LHyp) to cis-3-hydroxy-D-proline (c3DHyp), albeit with 19-fold lower efficiency. Displays no proline racemase activity. This chain is 4-hydroxyproline 2-epimerase, found in Chromobacterium violaceum (strain ATCC 12472 / DSM 30191 / JCM 1249 / CCUG 213 / NBRC 12614 / NCIMB 9131 / NCTC 9757 / MK).